A 683-amino-acid chain; its full sequence is ATP-dependent zinc metalloprotease FtsH 2 (683 aa).

The span at 1–12 (MADQTSQNDNQN) shows a compositional bias: polar residues. The tract at residues 1 to 21 (MADQTSQNDNQNGSGLPGGGP) is disordered. Over 1-28 (MADQTSQNDNQNGSGLPGGGPSGTGRGR) the chain is Cytoplasmic. A helical membrane pass occupies residues 29 to 49 (LIIWVIAGTLLALWAYSYWGM). The Periplasmic segment spans residues 50 to 136 (GASGGERISY…VTKPESSFPW (87 aa)). Residues 137–157 (GLVIMGLLPVLLLFGVGYIFL) traverse the membrane as a helical segment. At 158-683 (RRMQSQGQGL…ASGSADASGS (526 aa)) the chain is on the cytoplasmic side. Position 228–235 (228–235 (GPPGTGKT)) interacts with ATP. Residue histidine 450 participates in Zn(2+) binding. Glutamate 451 is an active-site residue. Zn(2+)-binding residues include histidine 454 and aspartate 526. The tract at residues 627–683 (VNGDTDEIGHMPTTNGAAASEENGSADDHEPDEATVIEEDGESGEGRASGSADASGS) is disordered. Residues 655-669 (HEPDEATVIEEDGES) are compositionally biased toward acidic residues. Over residues 672-683 (GRASGSADASGS) the composition is skewed to low complexity.

The protein in the central section; belongs to the AAA ATPase family. It in the C-terminal section; belongs to the peptidase M41 family. As to quaternary structure, homohexamer. Requires Zn(2+) as cofactor.

The protein localises to the cell inner membrane. Its function is as follows. Acts as a processive, ATP-dependent zinc metallopeptidase for both cytoplasmic and membrane proteins. Plays a role in the quality control of integral membrane proteins. This Salinibacter ruber (strain M8) protein is ATP-dependent zinc metalloprotease FtsH 2.